The sequence spans 120 residues: Small ribosomal subunit protein uS13 (120 aa).

Positions 96-120 (PCRGQRTRTNARTRKGPRKAIAGKK) are disordered.

The protein belongs to the universal ribosomal protein uS13 family. As to quaternary structure, part of the 30S ribosomal subunit. Forms a loose heterodimer with protein S19. Forms two bridges to the 50S subunit in the 70S ribosome.

Located at the top of the head of the 30S subunit, it contacts several helices of the 16S rRNA. In the 70S ribosome it contacts the 23S rRNA (bridge B1a) and protein L5 of the 50S subunit (bridge B1b), connecting the 2 subunits; these bridges are implicated in subunit movement. Contacts the tRNAs in the A and P-sites. This chain is Small ribosomal subunit protein uS13, found in Dechloromonas aromatica (strain RCB).